The primary structure comprises 165 residues: Cytochrome c-550-like protein (165 aa).

An N-terminal signal peptide occupies residues 1-30; sequence MLNKSLLIRFVLTILIIVQVIIFDTQPVQA. The heme c site is built by Cys-75, Cys-78, His-79, and Cys-129.

Belongs to the cytochrome c family. PsbV subfamily. It depends on heme c as a cofactor.

The protein localises to the cellular thylakoid membrane. Functionally, possible low-potential cytochrome c. This Trichodesmium erythraeum (strain IMS101) protein is Cytochrome c-550-like protein (psbV2).